The following is a 446-amino-acid chain: G patch domain-containing protein 4 (446 aa).

M1 bears the N-acetylmethionine mark. A Phosphothreonine modification is found at T4. Residues 11–57 form the G-patch domain; sequence GMKFAEEQLLKHGWTQGKGLGRKENGITQALRVTLKQDTHGVGHDPA. Residue K46 forms a Glycyl lysine isopeptide (Lys-Gly) (interchain with G-Cter in SUMO2) linkage. T116 carries the phosphothreonine modification. Disordered regions lie at residues 116-140 and 188-446; these read TSGG…SKSP and QDPG…KKRD. S128, S130, and S139 each carry phosphoserine. Residues 166 to 251 adopt a coiled-coil conformation; sequence TMKAKLARLE…KKKRRHQEGK (86 aa). Basic and acidic residues predominate over residues 219-237; that stretch reads ASERNDADEKHPEHAEQNI. Residues 238 to 248 are compositionally biased toward basic residues; the sequence is RKSKKKKRRHQ. Composition is skewed to basic and acidic residues over residues 249-268, 297-328, 363-375, and 392-409; these read EGKV…KEDA, HHEE…ESRA, REAE…DGRS, and LDVR…ESRA. Composition is skewed to basic residues over residues 416–427 and 437–446; these read RGKRKRQQHPKK and KAKKKQKKRD.

This is G patch domain-containing protein 4 (GPATCH4) from Homo sapiens (Human).